The chain runs to 601 residues: Elongation factor 4 (601 aa).

One can recognise a tr-type G domain in the interval 5–187; sequence SNIRNFSIIA…AIVERLPAPE (183 aa). GTP-binding positions include 17-22 and 134-137; these read DHGKST and NKID.

The protein belongs to the TRAFAC class translation factor GTPase superfamily. Classic translation factor GTPase family. LepA subfamily.

The protein localises to the cell inner membrane. It carries out the reaction GTP + H2O = GDP + phosphate + H(+). Its function is as follows. Required for accurate and efficient protein synthesis under certain stress conditions. May act as a fidelity factor of the translation reaction, by catalyzing a one-codon backward translocation of tRNAs on improperly translocated ribosomes. Back-translocation proceeds from a post-translocation (POST) complex to a pre-translocation (PRE) complex, thus giving elongation factor G a second chance to translocate the tRNAs correctly. Binds to ribosomes in a GTP-dependent manner. This chain is Elongation factor 4, found in Oleidesulfovibrio alaskensis (strain ATCC BAA-1058 / DSM 17464 / G20) (Desulfovibrio alaskensis).